The primary structure comprises 146 residues: Late protein H7 (146 aa).

Residues 10–32 (LAMTAFFGELNTLDIMALIMSIF) form a helical membrane-spanning segment.

Belongs to the chordopoxvirinae H7 family.

It localises to the membrane. Contributes to the formation of crescents and immature virions (IV). This Vaccinia virus (strain Tian Tan) (VACV) protein is Late protein H7.